A 194-amino-acid chain; its full sequence is ATP-dependent Clp protease proteolytic subunit (194 aa).

Ser98 (nucleophile) is an active-site residue. His123 is an active-site residue.

The protein belongs to the peptidase S14 family. In terms of assembly, fourteen ClpP subunits assemble into 2 heptameric rings which stack back to back to give a disk-like structure with a central cavity, resembling the structure of eukaryotic proteasomes.

The protein resides in the cytoplasm. The enzyme catalyses Hydrolysis of proteins to small peptides in the presence of ATP and magnesium. alpha-casein is the usual test substrate. In the absence of ATP, only oligopeptides shorter than five residues are hydrolyzed (such as succinyl-Leu-Tyr-|-NHMec, and Leu-Tyr-Leu-|-Tyr-Trp, in which cleavage of the -Tyr-|-Leu- and -Tyr-|-Trp bonds also occurs).. Functionally, cleaves peptides in various proteins in a process that requires ATP hydrolysis. Has a chymotrypsin-like activity. Plays a major role in the degradation of misfolded proteins. This Acetivibrio thermocellus (strain ATCC 27405 / DSM 1237 / JCM 9322 / NBRC 103400 / NCIMB 10682 / NRRL B-4536 / VPI 7372) (Clostridium thermocellum) protein is ATP-dependent Clp protease proteolytic subunit.